Consider the following 159-residue polypeptide: Protein UXT homolog (159 aa).

This sequence belongs to the UXT family.

This Nematostella vectensis (Starlet sea anemone) protein is Protein UXT homolog.